Here is a 486-residue protein sequence, read N- to C-terminus: Bifunctional protein HldE (486 aa).

A ribokinase region spans residues 1–329; it reads MSSRLSGLLD…AALSVAGPVG (329 aa). Position 204-207 (204-207) interacts with ATP; it reads NAFE. Residue Asp274 is part of the active site. The interval 355-486 is cytidylyltransferase; it reads FTNGCFDILH…AIIARSETGK (132 aa).

The protein in the N-terminal section; belongs to the carbohydrate kinase PfkB family. It in the C-terminal section; belongs to the cytidylyltransferase family. Homodimer.

The catalysed reaction is D-glycero-beta-D-manno-heptose 7-phosphate + ATP = D-glycero-beta-D-manno-heptose 1,7-bisphosphate + ADP + H(+). It catalyses the reaction D-glycero-beta-D-manno-heptose 1-phosphate + ATP + H(+) = ADP-D-glycero-beta-D-manno-heptose + diphosphate. Its pathway is nucleotide-sugar biosynthesis; ADP-L-glycero-beta-D-manno-heptose biosynthesis; ADP-L-glycero-beta-D-manno-heptose from D-glycero-beta-D-manno-heptose 7-phosphate: step 1/4. It participates in nucleotide-sugar biosynthesis; ADP-L-glycero-beta-D-manno-heptose biosynthesis; ADP-L-glycero-beta-D-manno-heptose from D-glycero-beta-D-manno-heptose 7-phosphate: step 3/4. Functionally, catalyzes the phosphorylation of D-glycero-D-manno-heptose 7-phosphate at the C-1 position to selectively form D-glycero-beta-D-manno-heptose-1,7-bisphosphate. Its function is as follows. Catalyzes the ADP transfer from ATP to D-glycero-beta-D-manno-heptose 1-phosphate, yielding ADP-D-glycero-beta-D-manno-heptose. In Hyphomonas neptunium (strain ATCC 15444), this protein is Bifunctional protein HldE.